The following is a 230-amino-acid chain: Modulator of macroautophagy TMEM150B (230 aa).

Met1 is a topological domain (cytoplasmic). The helical transmembrane segment at 2 to 22 (WAWALLPICLTIWATAGIWIV) threads the bilayer. At 23–50 (YGMSVSNGSVNLTDGFPFISLCGTYPPQ) the chain is on the extracellular side. N-linked (GlcNAc...) asparagine glycosylation is found at Asn29 and Asn33. Residues 51-71 (SCVFGQVLNVGAMLGVWISVI) traverse the membrane as a helical segment. The Cytoplasmic portion of the chain corresponds to 72 to 83 (RFQQIRDYGCHS). A helical membrane pass occupies residues 84–104 (VLNSVSLAMGLLCALGTSIVG). At 105–115 (NFQQSNQLETH) the chain is on the extracellular side. The helical transmembrane segment at 116 to 136 (LAGAFLAFVIGNIYFWMQTVL) threads the bilayer. Over 137 to 150 (TYMVKPKHGGCYIG) the chain is Cytoplasmic. A helical transmembrane segment spans residues 151–171 (PIRFCLSVACTALIVLMAVFL). The Extracellular portion of the chain corresponds to 172 to 183 (KLNMKSISAICE). Residues 184–204 (WIVAMILFLLYGLFSVDFWHL) traverse the membrane as a helical segment. The Cytoplasmic portion of the chain corresponds to 205 to 230 (DGHYFHVKKRTAIPNEVEVSTVTLNI).

It belongs to the DRAM/TMEM150 family.

The protein resides in the cell membrane. Its subcellular location is the endosome membrane. The protein localises to the cytoplasmic vesicle. It localises to the autophagosome membrane. Functionally, modulator of macroautophagy that causes accumulation of autophagosomes under basal conditions and enhances autophagic flux. Represses cell death and promotes long-term clonogenic survival of cells grown in the absence of glucose in a macroautophagy-independent manner. May have some role in extracellular matrix engulfment or growth factor receptor recycling, both of which can modulate cell survival. The chain is Modulator of macroautophagy TMEM150B from Xenopus tropicalis (Western clawed frog).